The chain runs to 430 residues: Mannosylglucosylglycerate synthase (430 aa).

Belongs to the glycosyltransferase group 1 family. A divalent metal cation serves as cofactor.

It catalyses the reaction (2R)-2-O-(alpha-D-glucopyranosyl)-glycerate + GDP-alpha-D-mannose = (2R)-2-O-[alpha-D-mannopyranosyl-(1-&gt;2)-alpha-D-glucopyranosyl]-glycerate + GDP + H(+). Functionally, involved in the biosynthesis of the compatible solute mannosylglucosylglycerate through a nonphosphorylating pathway. Catalyzes the synthesis of mannosylglucosylglycerate (MGG) from glucosylglycerate (GG) and GDP-mannose. The polypeptide is Mannosylglucosylglycerate synthase (Petrotoga mobilis (strain DSM 10674 / SJ95)).